We begin with the raw amino-acid sequence, 322 residues long: Sideroflexin fsf1 (322 aa).

The next 4 helical transmembrane spans lie at 143 to 163, 175 to 195, 229 to 249, and 269 to 289; these read SYIY…KIVP, VLGR…NVFL, TALS…LVLM, and LGLI…VFPA.

It belongs to the sideroflexin family.

The protein localises to the mitochondrion membrane. Mitochondrial amino-acid transporter that mediates transport of serine into mitochondria. In Schizosaccharomyces pombe (strain 972 / ATCC 24843) (Fission yeast), this protein is Sideroflexin fsf1.